Here is a 713-residue protein sequence, read N- to C-terminus: Histone-lysine N-methyltransferase SETDB2 (713 aa).

A disordered region spans residues Pro78–Asn109. The segment covering His87–Asn109 has biased composition (polar residues). An MBD domain is found at Leu161–Gln233. The 74-residue stretch at Asp294 to Gly367 folds into the Pre-SET domain. Zn(2+) contacts are provided by Cys296, Cys298, Cys302, Cys308, Cys310, Cys348, Cys352, Cys354, and Cys359. One can recognise an SET domain in the interval Val370 to Gly688. An S-adenosyl-L-methionine-binding site is contributed by Lys380–Trp382. Basic and acidic residues-rich tracts occupy residues Glu511–Leu534 and Thr579–Glu592. Disordered stretches follow at residues Glu511–Glu549 and Thr579–Glu608. S-adenosyl-L-methionine contacts are provided by residues Arg642 and Asn645 to His646. Cys648, Cys701, Cys703, and Cys708 together coordinate Zn(2+).

This sequence belongs to the class V-like SAM-binding methyltransferase superfamily.

The protein localises to the nucleus. The protein resides in the chromosome. The enzyme catalyses N(6),N(6)-dimethyl-L-lysyl(9)-[histone H3] + S-adenosyl-L-methionine = N(6),N(6),N(6)-trimethyl-L-lysyl(9)-[histone H3] + S-adenosyl-L-homocysteine + H(+). Histone methyltransferase involved in left-right axis specification in early development and mitosis. Specifically trimethylates 'Lys-9' of histone H3 (H3K9me3). H3K9me3 is a specific tag for epigenetic transcriptional repression that recruits HP1 (CBX1, CBX3 and/or CBX5) proteins to methylated histones. Contributes to H3K9me3 in both the interspersed repetitive elements and centromere-associated repeats. Plays a role in chromosome condensation and segregation during mitosis. This Mus musculus (Mouse) protein is Histone-lysine N-methyltransferase SETDB2 (Setdb2).